The sequence spans 135 residues: Sex-regulated protein janus-A (135 aa).

A substrate-binding site is contributed by K37. H63 acts as the Proton acceptor in catalysis. Residue 104–106 participates in substrate binding; that stretch reads SQG.

It belongs to the janus family.

Functionally, janA and janB regulate somatic sex differentiation. In Drosophila orena (Fruit fly), this protein is Sex-regulated protein janus-A (janA).